Reading from the N-terminus, the 159-residue chain is Voltage-dependent N-type calcium channel subunit alpha-1B (159 aa).

Residues L1–I5 form a helical membrane-spanning segment. One copy of the IV repeat lies at L1 to I159. Residues A6–N13 are Extracellular-facing. A glycan (N-linked (GlcNAc...) asparagine) is linked at N13. Residues L14–G32 traverse the membrane as a helical segment. The Cytoplasmic portion of the chain corresponds to Y33–Y51. Residues V52–F71 traverse the membrane as a helical segment. The Extracellular portion of the chain corresponds to G72–F135. A helical membrane pass occupies residues A136–F155. Over V156 to I159 the chain is Cytoplasmic.

The protein belongs to the calcium channel alpha-1 subunit (TC 1.A.1.11) family. CACNA1B subfamily. As to quaternary structure, multisubunit complex consisting of alpha-1, alpha-2, beta and delta subunits in a 1:1:1:1 ratio. The channel activity is directed by the pore-forming and voltage-sensitive alpha-1 subunit. In many cases, this subunit is sufficient to generate voltage-sensitive calcium channel activity. The auxiliary subunits beta and alpha-2/delta linked by a disulfide bridge regulate the channel activity. Interacts with RIMBP2. Phosphorylated in vitro by CaM-kinase II, PKA, PKC and CGPK.

It localises to the membrane. The catalysed reaction is Ca(2+)(in) = Ca(2+)(out). Functionally, voltage-sensitive calcium channels (VSCC) mediate the entry of calcium ions into excitable cells and are also involved in a variety of calcium-dependent processes, including muscle contraction, hormone or neurotransmitter release, gene expression, cell motility, cell division and cell death. This alpha-1B subunit gives rise to N-type calcium currents. N-type calcium channels belong to the 'high-voltage activated' (HVA) group. They are involved in pain signaling. Calcium channels containing alpha-1B subunit may play a role in directed migration of immature neurons. Mediates Ca(2+) release probability at hippocampal neuronal soma and synaptic terminals. The chain is Voltage-dependent N-type calcium channel subunit alpha-1B (CACNA1B) from Gallus gallus (Chicken).